A 185-amino-acid polypeptide reads, in one-letter code: Elongation factor P (185 aa).

Belongs to the elongation factor P family.

It localises to the cytoplasm. Its pathway is protein biosynthesis; polypeptide chain elongation. Functionally, involved in peptide bond synthesis. Stimulates efficient translation and peptide-bond synthesis on native or reconstituted 70S ribosomes in vitro. Probably functions indirectly by altering the affinity of the ribosome for aminoacyl-tRNA, thus increasing their reactivity as acceptors for peptidyl transferase. The protein is Elongation factor P of Nitrosomonas eutropha (strain DSM 101675 / C91 / Nm57).